An 811-amino-acid chain; its full sequence is Elongation factor G, mitochondrial (811 aa).

The N-terminal 64 residues, 1–64 (MSAIARAAAR…FQQSFQRRWA (64 aa)), are a transit peptide targeting the mitochondrion. The tr-type G domain occupies 96 to 394 (RRQRNVGISA…GVCAYLPNPS (299 aa)). GTP is bound by residues 105-112 (AHIDSGKT), 192-196 (DTPGH), and 246-249 (NKMD).

It belongs to the TRAFAC class translation factor GTPase superfamily. Classic translation factor GTPase family. EF-G/EF-2 subfamily.

It localises to the mitochondrion. It participates in protein biosynthesis; polypeptide chain elongation. In terms of biological role, mitochondrial GTPase that catalyzes the GTP-dependent ribosomal translocation step during translation elongation. During this step, the ribosome changes from the pre-translocational (PRE) to the post-translocational (POST) state as the newly formed A-site-bound peptidyl-tRNA and P-site-bound deacylated tRNA move to the P and E sites, respectively. Catalyzes the coordinated movement of the two tRNA molecules, the mRNA and conformational changes in the ribosome. This Cryptococcus neoformans var. neoformans serotype D (strain B-3501A) (Filobasidiella neoformans) protein is Elongation factor G, mitochondrial.